We begin with the raw amino-acid sequence, 163 residues long: Peptide deformylase (163 aa).

Fe cation-binding residues include C91 and H133. E134 is an active-site residue. A Fe cation-binding site is contributed by H137.

Belongs to the polypeptide deformylase family. Fe(2+) serves as cofactor.

The catalysed reaction is N-terminal N-formyl-L-methionyl-[peptide] + H2O = N-terminal L-methionyl-[peptide] + formate. Removes the formyl group from the N-terminal Met of newly synthesized proteins. Requires at least a dipeptide for an efficient rate of reaction. N-terminal L-methionine is a prerequisite for activity but the enzyme has broad specificity at other positions. This is Peptide deformylase from Lachnoclostridium phytofermentans (strain ATCC 700394 / DSM 18823 / ISDg) (Clostridium phytofermentans).